Here is a 101-residue protein sequence, read N- to C-terminus: Iron-sulfur cluster assembly protein CyaY (101 aa).

Belongs to the frataxin family.

In terms of biological role, involved in iron-sulfur (Fe-S) cluster assembly. May act as a regulator of Fe-S biogenesis. This Haemophilus influenzae (strain 86-028NP) protein is Iron-sulfur cluster assembly protein CyaY.